A 300-amino-acid polypeptide reads, in one-letter code: Bifunctional protein FolD 2 (300 aa).

NADP(+) contacts are provided by residues 165–167 (GRS), serine 190, and isoleucine 231.

Belongs to the tetrahydrofolate dehydrogenase/cyclohydrolase family. Homodimer.

The enzyme catalyses (6R)-5,10-methylene-5,6,7,8-tetrahydrofolate + NADP(+) = (6R)-5,10-methenyltetrahydrofolate + NADPH. It catalyses the reaction (6R)-5,10-methenyltetrahydrofolate + H2O = (6R)-10-formyltetrahydrofolate + H(+). It participates in one-carbon metabolism; tetrahydrofolate interconversion. Its function is as follows. Catalyzes the oxidation of 5,10-methylenetetrahydrofolate to 5,10-methenyltetrahydrofolate and then the hydrolysis of 5,10-methenyltetrahydrofolate to 10-formyltetrahydrofolate. This is Bifunctional protein FolD 2 from Pseudomonas savastanoi pv. phaseolicola (strain 1448A / Race 6) (Pseudomonas syringae pv. phaseolicola (strain 1448A / Race 6)).